The chain runs to 146 residues: Cytochrome c oxidase subunit 5A, mitochondrial (146 aa).

Residues 1-37 (MLAAALRRCTAAAAARGLLHPASAPSPAAAVCSIRCY) constitute a mitochondrion transit peptide. An SIFI-degron motif is present at residues 2 to 16 (LAAALRRCTAAAAAR). 2 positions are modified to N6-acetyllysine: lysine 83 and lysine 109. Threonine 137 is modified (phosphothreonine).

This sequence belongs to the cytochrome c oxidase subunit 5A family. As to quaternary structure, component of the cytochrome c oxidase (complex IV, CIV), a multisubunit enzyme composed of 14 subunits. The complex is composed of a catalytic core of 3 subunits MT-CO1, MT-CO2 and MT-CO3, encoded in the mitochondrial DNA, and 11 supernumerary subunits COX4I, COX5A, COX5B, COX6A, COX6B, COX6C, COX7A, COX7B, COX7C, COX8 and NDUFA4, which are encoded in the nuclear genome. The complex exists as a monomer or a dimer and forms supercomplexes (SCs) in the inner mitochondrial membrane with NADH-ubiquinone oxidoreductase (complex I, CI) and ubiquinol-cytochrome c oxidoreductase (cytochrome b-c1 complex, complex III, CIII), resulting in different assemblies (supercomplex SCI(1)III(2)IV(1) and megacomplex MCI(2)III(2)IV(2)). Interacts with AFG1L. Interacts with RAB5IF. Post-translationally, in response to mitochondrial stress, the precursor protein is ubiquitinated by the SIFI complex in the cytoplasm before mitochondrial import, leading to its degradation. Within the SIFI complex, UBR4 initiates ubiquitin chain that are further elongated or branched by KCMF1.

Its subcellular location is the mitochondrion inner membrane. The protein operates within energy metabolism; oxidative phosphorylation. In terms of biological role, component of the cytochrome c oxidase, the last enzyme in the mitochondrial electron transport chain which drives oxidative phosphorylation. The respiratory chain contains 3 multisubunit complexes succinate dehydrogenase (complex II, CII), ubiquinol-cytochrome c oxidoreductase (cytochrome b-c1 complex, complex III, CIII) and cytochrome c oxidase (complex IV, CIV), that cooperate to transfer electrons derived from NADH and succinate to molecular oxygen, creating an electrochemical gradient over the inner membrane that drives transmembrane transport and the ATP synthase. Cytochrome c oxidase is the component of the respiratory chain that catalyzes the reduction of oxygen to water. Electrons originating from reduced cytochrome c in the intermembrane space (IMS) are transferred via the dinuclear copper A center (CU(A)) of subunit 2 and heme A of subunit 1 to the active site in subunit 1, a binuclear center (BNC) formed by heme A3 and copper B (CU(B)). The BNC reduces molecular oxygen to 2 water molecules using 4 electrons from cytochrome c in the IMS and 4 protons from the mitochondrial matrix. This chain is Cytochrome c oxidase subunit 5A, mitochondrial (Cox5a), found in Mus musculus (Mouse).